A 435-amino-acid polypeptide reads, in one-letter code: Tryptophan--tRNA ligase (435 aa).

ATP contacts are provided by residues 10 to 12 (TTS) and 18 to 19 (GN). Residues 11-19 (TSGTPHLGN) carry the 'HIGH' region motif. Asp143 lines the L-tryptophan pocket. Residues 155–157 (GRD), Leu195, and 202–206 (KMSKS) each bind ATP. The 'KMSKS' region motif lies at 202-206 (KMSKS).

It belongs to the class-I aminoacyl-tRNA synthetase family. As to quaternary structure, homodimer.

It is found in the cytoplasm. It catalyses the reaction tRNA(Trp) + L-tryptophan + ATP = L-tryptophyl-tRNA(Trp) + AMP + diphosphate + H(+). Catalyzes the attachment of tryptophan to tRNA(Trp). The polypeptide is Tryptophan--tRNA ligase (Xylella fastidiosa (strain Temecula1 / ATCC 700964)).